A 388-amino-acid polypeptide reads, in one-letter code: Chorismate synthase (388 aa).

Residues Arg39 and Arg45 each contribute to the NADP(+) site. FMN contacts are provided by residues 130–132 (RSS), 251–252 (NA), Ala296, 311–315 (KPIPT), and Arg337.

Belongs to the chorismate synthase family. In terms of assembly, homotetramer. FMNH2 serves as cofactor.

The enzyme catalyses 5-O-(1-carboxyvinyl)-3-phosphoshikimate = chorismate + phosphate. Its pathway is metabolic intermediate biosynthesis; chorismate biosynthesis; chorismate from D-erythrose 4-phosphate and phosphoenolpyruvate: step 7/7. In terms of biological role, catalyzes the anti-1,4-elimination of the C-3 phosphate and the C-6 proR hydrogen from 5-enolpyruvylshikimate-3-phosphate (EPSP) to yield chorismate, which is the branch point compound that serves as the starting substrate for the three terminal pathways of aromatic amino acid biosynthesis. This reaction introduces a second double bond into the aromatic ring system. This is Chorismate synthase from Streptococcus equi subsp. equi (strain 4047).